The chain runs to 151 residues: Lectin-like protein BA14k (151 aa).

The N-terminal stretch at 1-26 is a signal peptide; it reads MNIFKQTCVGAFAVIFGATSIAPTMA. A helical transmembrane segment spans residues 83 to 103; it reads GWWYPLAAFGAGAIIGGAVSQ.

It belongs to the BA14k family.

The protein localises to the cell membrane. Has immunoglobulin-binding and hemagglutination properties, and can bind to mannose. Essential for virulence. May be involved in LPS biosynthesis or polysaccharide transport. This is Lectin-like protein BA14k from Brucella anthropi (strain ATCC 49188 / DSM 6882 / CCUG 24695 / JCM 21032 / LMG 3331 / NBRC 15819 / NCTC 12168 / Alc 37) (Ochrobactrum anthropi).